Here is a 187-residue protein sequence, read N- to C-terminus: Threonylcarbamoyl-AMP synthase (187 aa).

One can recognise a YrdC-like domain in the interval glutamine 3–glycine 187.

The protein belongs to the SUA5 family. TsaC subfamily.

The protein resides in the cytoplasm. The enzyme catalyses L-threonine + hydrogencarbonate + ATP = L-threonylcarbamoyladenylate + diphosphate + H2O. Its function is as follows. Required for the formation of a threonylcarbamoyl group on adenosine at position 37 (t(6)A37) in tRNAs that read codons beginning with adenine. Catalyzes the conversion of L-threonine, HCO(3)(-)/CO(2) and ATP to give threonylcarbamoyl-AMP (TC-AMP) as the acyladenylate intermediate, with the release of diphosphate. The polypeptide is Threonylcarbamoyl-AMP synthase (Shewanella pealeana (strain ATCC 700345 / ANG-SQ1)).